We begin with the raw amino-acid sequence, 609 residues long: Glutamine--fructose-6-phosphate aminotransferase [isomerizing] (609 aa).

Residue C2 is the Nucleophile; for GATase activity of the active site. The 216-residue stretch at 2 to 217 (CGIVGAIAGR…DGDTAEIRRD (216 aa)) folds into the Glutamine amidotransferase type-2 domain. SIS domains lie at 285–425 (AESV…LRGA) and 458–599 (WAEC…VDKP). K604 serves as the catalytic For Fru-6P isomerization activity.

In terms of assembly, homodimer.

Its subcellular location is the cytoplasm. It carries out the reaction D-fructose 6-phosphate + L-glutamine = D-glucosamine 6-phosphate + L-glutamate. Its function is as follows. Catalyzes the first step in hexosamine metabolism, converting fructose-6P into glucosamine-6P using glutamine as a nitrogen source. This Xylella fastidiosa (strain 9a5c) protein is Glutamine--fructose-6-phosphate aminotransferase [isomerizing].